Consider the following 146-residue polypeptide: Large ribosomal subunit protein uL15x (146 aa).

Basic residues-rich tracts occupy residues 1–14 (MTTR…KRGH) and 21–30 (RIGKHRKHPG). The segment at 1-35 (MTTRFKKNRKKRGHVSAGHGRIGKHRKHPGGRGNA) is disordered.

This sequence belongs to the universal ribosomal protein uL15 family.

The polypeptide is Large ribosomal subunit protein uL15x (RPL27AC) (Arabidopsis thaliana (Mouse-ear cress)).